The chain runs to 192 residues: Peptidyl-tRNA hydrolase (192 aa).

His-17 serves as a coordination point for tRNA. His-22 serves as the catalytic Proton acceptor. Residues Phe-68, Asn-70, and Asn-116 each coordinate tRNA.

Belongs to the PTH family. In terms of assembly, monomer.

The protein resides in the cytoplasm. It catalyses the reaction an N-acyl-L-alpha-aminoacyl-tRNA + H2O = an N-acyl-L-amino acid + a tRNA + H(+). Hydrolyzes ribosome-free peptidyl-tRNAs (with 1 or more amino acids incorporated), which drop off the ribosome during protein synthesis, or as a result of ribosome stalling. Functionally, catalyzes the release of premature peptidyl moieties from peptidyl-tRNA molecules trapped in stalled 50S ribosomal subunits, and thus maintains levels of free tRNAs and 50S ribosomes. The sequence is that of Peptidyl-tRNA hydrolase from Stenotrophomonas maltophilia (strain K279a).